The sequence spans 190 residues: DNA-invertase hin (190 aa).

The Resolvase/invertase-type recombinase catalytic domain maps to 2–135 (ATIGYIRVST…AGLAAARAQG (134 aa)). Serine 10 functions as the O-(5'-phospho-DNA)-serine intermediate in the catalytic mechanism. Residues 162-181 (RQQLAIIFGIGVSTLYRYFP) constitute a DNA-binding region (H-T-H motif).

The protein belongs to the site-specific recombinase resolvase family.

A DNA fragment of approximately 900 base pairs, adjacent to the fljB (H2) gene, which specifies the synthesis of phase-2 flagellin, can exist in either orientation with respect to fljB. The orientation of the inversion region controls expression of fljB. The hin gene occupies about two-thirds of the inversion region; it is required for the inversion of the fljB controlling region. This is DNA-invertase hin (hin) from Salmonella typhimurium (strain LT2 / SGSC1412 / ATCC 700720).